Reading from the N-terminus, the 162-residue chain is Putative 4-hydroxy-4-methyl-2-oxoglutarate aldolase (162 aa).

Substrate contacts are provided by residues Gly-75 to Leu-78 and Arg-97. An a divalent metal cation-binding site is contributed by Asp-98.

The protein belongs to the class II aldolase/RraA-like family. Homotrimer. A divalent metal cation serves as cofactor.

The catalysed reaction is 4-hydroxy-4-methyl-2-oxoglutarate = 2 pyruvate. It catalyses the reaction oxaloacetate + H(+) = pyruvate + CO2. Its function is as follows. Catalyzes the aldol cleavage of 4-hydroxy-4-methyl-2-oxoglutarate (HMG) into 2 molecules of pyruvate. Also contains a secondary oxaloacetate (OAA) decarboxylase activity due to the common pyruvate enolate transition state formed following C-C bond cleavage in the retro-aldol and decarboxylation reactions. This is Putative 4-hydroxy-4-methyl-2-oxoglutarate aldolase from Pseudomonas syringae pv. tomato (strain ATCC BAA-871 / DC3000).